Reading from the N-terminus, the 214-residue chain is Adenylate kinase (214 aa).

10–15 contributes to the ATP binding site; sequence GAGKGT. The tract at residues 30-59 is NMP; it reads STGDMLRAAVKAQTPVGLKAKAVMDRGELV. AMP contacts are provided by residues threonine 31, arginine 36, 57–59, 85–88, and glutamine 92; these read ELV and GYPR. Residues 126–163 form an LID region; that stretch reads GRFTCAKCGTGYHDRHKQPAREGVCDVCGSTEFKRRPD. An ATP-binding site is contributed by arginine 127. The Zn(2+) site is built by cysteine 130, cysteine 133, cysteine 150, and cysteine 153. Residues arginine 160 and arginine 172 each contribute to the AMP site. Glycine 200 is a binding site for ATP.

This sequence belongs to the adenylate kinase family. Monomer.

It localises to the cytoplasm. The catalysed reaction is AMP + ATP = 2 ADP. It participates in purine metabolism; AMP biosynthesis via salvage pathway; AMP from ADP: step 1/1. Functionally, catalyzes the reversible transfer of the terminal phosphate group between ATP and AMP. Plays an important role in cellular energy homeostasis and in adenine nucleotide metabolism. This chain is Adenylate kinase, found in Erythrobacter litoralis (strain HTCC2594).